Consider the following 96-residue polypeptide: Co-chaperonin GroES (96 aa).

It belongs to the GroES chaperonin family. Heptamer of 7 subunits arranged in a ring. Interacts with the chaperonin GroEL.

It is found in the cytoplasm. Its function is as follows. Together with the chaperonin GroEL, plays an essential role in assisting protein folding. The GroEL-GroES system forms a nano-cage that allows encapsulation of the non-native substrate proteins and provides a physical environment optimized to promote and accelerate protein folding. GroES binds to the apical surface of the GroEL ring, thereby capping the opening of the GroEL channel. This is Co-chaperonin GroES from Vibrio atlanticus (strain LGP32) (Vibrio splendidus (strain Mel32)).